The chain runs to 407 residues: Zinc finger protein 552 (407 aa).

Residues 14–90 (VTFEDVAVKF…PMAGVSPKKA (77 aa)) form the KRAB domain. Residues 91–113 (HPCEMCGPILGDILHVADHQGTH) form a C2H2-type 1 zinc finger. The segment at 119 to 141 (HRCEAWGNKLYDSGNFHQHQNEH) adopts a C2H2-type 2; degenerate zinc-finger fold. Residues K176 and K198 each participate in a glycyl lysine isopeptide (Lys-Gly) (interchain with G-Cter in SUMO2) cross-link. The segment at 212-234 (YSCGGCMKHFSTKDILSQHERLL) adopts a C2H2-type 3; degenerate zinc-finger fold. The segment at 244-262 (ECGKSSSKYDSFSNHQGVH) adopts a C2H2-type 4; degenerate zinc-finger fold. Glycyl lysine isopeptide (Lys-Gly) (interchain with G-Cter in SUMO2) cross-links involve residues K251 and K266. 5 consecutive C2H2-type zinc fingers follow at residues 268-290 (YTCGICGKLFNSKSHLLVHQRIH), 296-318 (YECEVCQKFFRHKYHLIAHQRVH), 324-346 (YECSDCGKSFTHSSTFRVHKRVH), 352-374 (YECSECGKSFAESSSLTKHRRVH), and 380-402 (YGCSECEKKFRQISSLRHHQRVH). A Glycyl lysine isopeptide (Lys-Gly) (interchain with G-Cter in SUMO2) cross-link involves residue K308.

Belongs to the krueppel C2H2-type zinc-finger protein family.

It is found in the nucleus. In terms of biological role, may be involved in transcriptional regulation. The chain is Zinc finger protein 552 (ZNF552) from Homo sapiens (Human).